Consider the following 417-residue polypeptide: Probable serine/threonine-protein kinase WNK9 (417 aa).

The segment at 1 to 23 (MDLVEAEAEEQPPDEDGDEEGYV) is disordered. The region spanning 32 to 289 (IRYDEIVGSG…ATELLKSSFL (258 aa)) is the Protein kinase domain. ATP-binding positions include 113–116 (TELF) and Lys163. The Proton acceptor role is filled by Asp180.

Belongs to the protein kinase superfamily. Ser/Thr protein kinase family. WNK subfamily.

It catalyses the reaction L-seryl-[protein] + ATP = O-phospho-L-seryl-[protein] + ADP + H(+). The catalysed reaction is L-threonyl-[protein] + ATP = O-phospho-L-threonyl-[protein] + ADP + H(+). This chain is Probable serine/threonine-protein kinase WNK9 (WNK9), found in Oryza sativa subsp. japonica (Rice).